Consider the following 620-residue polypeptide: UDP-glucose:protein N-beta-glucosyltransferase (620 aa).

Belongs to the glycosyltransferase 41 family.

The protein resides in the cytoplasm. The catalysed reaction is L-asparaginyl-[protein] + UDP-alpha-D-glucose = N(4)-(beta-D-glucosyl)-L-asparaginyl-[protein] + UDP + H(+). Its pathway is protein modification; protein glycosylation. In terms of biological role, inverting glycosyltransferase that catalyzes the transfer of one glucose moiety from UDP-glucose to an asparagine residue in peptides and proteins containing the NX(S/T) motif, resulting in their modification with a beta-linked 1,N-glucose. Likely acts as a key component of a general protein glycosylation system. The chain is UDP-glucose:protein N-beta-glucosyltransferase from Actinobacillus pleuropneumoniae serotype 5b (strain L20).